Consider the following 573-residue polypeptide: DNA polymerase lambda (573 aa).

The region spanning 35 to 131 (EARGWLSSLR…RLTDTEGFSL (97 aa)) is the BRCT domain. Disordered regions lie at residues 126-204 (TEGF…GPQV) and 214-233 (TGHY…APEA). Residues 263 to 277 (KAYSVQGDKWRALGY) are DNA-binding. The active-site Schiff-base intermediate with DNA is Lys310. The interval 343–346 (GTKT) is DNA-binding. Residues Arg384, 415–418 (SYRR), and 424–427 (GDVD) contribute to the dCTP site. An involved in primer binding region spans residues 418–427 (RGKMTCGDVD). Residues Asp425, Asp427, and Asp488 each contribute to the Mn(2+) site. Positions 464–503 (ENGQQQKYLGVCRLPGPGKRHRRLDIIVVPYCEFACALLY) are DNA-binding. Position 511 (Asn511) interacts with dCTP.

Belongs to the DNA polymerase type-X family. In terms of assembly, interacts with PCNA. Interacts with PAXX; promoting POLL recruitment to double-strand breaks (DSBs) and stimulation of the end-filling activity of POLL. Interacts with XRCC4; promoting POLL recruitment to double-strand breaks (DSBs) and stimulation of the end-filling activity of POLL. Interacts with NHEJ1/XLF; promoting POLL recruitment to double-strand breaks (DSBs) and stimulation of the end-filling activity of POLL. It depends on Mn(2+) as a cofactor.

The protein resides in the nucleus. It catalyses the reaction DNA(n) + a 2'-deoxyribonucleoside 5'-triphosphate = DNA(n+1) + diphosphate. Functionally, DNA polymerase that functions in several pathways of DNA repair. Involved in base excision repair (BER) responsible for repair of lesions that give rise to abasic (AP) sites in DNA. Also contributes to DNA double-strand break repair by non-homologous end joining and homologous recombination. Has both template-dependent and template-independent (terminal transferase) DNA polymerase activities. Also has a 5'-deoxyribose-5-phosphate lyase (dRP lyase) activity. This Mus musculus (Mouse) protein is DNA polymerase lambda.